A 309-amino-acid polypeptide reads, in one-letter code: T-lymphocyte activation antigen CD86 (309 aa).

The N-terminal stretch at 1–23 (MDPRCTMGLAILIFVTVLLISDA) is a signal peptide. At 24–244 (VSVETQAYFN…EFPSPQTYWK (221 aa)) the chain is on the extracellular side. Residues N33, N47, N92, N135, N146, N154, N175, N190, and N231 are each glycosylated (N-linked (GlcNAc...) asparagine). One can recognise an Ig-like V-type domain in the interval 33-128 (NGTAYLPCPF…GSIILQQTLT (96 aa)). A disulfide bridge links C40 with C110. The Ig-like C2-type domain occupies 150 to 223 (NSGINLTCTS…VVCVLETESM (74 aa)). A disulfide bridge links C157 with C216. Residues 245-265 (EITASVTVALLLVMLLIIVCH) form a helical membrane-spanning segment. Topologically, residues 266–309 (KKPNQPSRPSNTASKLERDSNADRETINLKELEPQIASAKPNAE) are cytoplasmic. Positions 269–279 (NQPSRPSNTAS) are enriched in polar residues. Residues 269 to 309 (NQPSRPSNTASKLERDSNADRETINLKELEPQIASAKPNAE) form a disordered region. The segment covering 280–298 (KLERDSNADRETINLKELE) has biased composition (basic and acidic residues).

In terms of assembly, homodimer. Interacts with MARCH8. Interacts (via cytoplasmic domain) with PHB1 and PHB2; the interactions increases after priming with CD40. Interacts with CD28. Post-translationally, polyubiquitinated; which is promoted by MARCH8 and results in endocytosis and lysosomal degradation. Expressed on activated B-cells.

Its subcellular location is the cell membrane. Its function is as follows. Receptor involved in the costimulatory signal essential for T-lymphocyte proliferation and interleukin-2 production, by binding CD28 or CTLA-4. May play a critical role in the early events of T-cell activation and costimulation of naive T-cells, such as deciding between immunity and anergy that is made by T-cells within 24 hours after activation. Also involved in the regulation of B cells function, plays a role in regulating the level of IgG(1) produced. Upon CD40 engagement, activates NF-kappa-B signaling pathway via phospholipase C and protein kinase C activation. In Mus musculus (Mouse), this protein is T-lymphocyte activation antigen CD86 (Cd86).